The following is a 226-amino-acid chain: Putative 5'-nucleotidase alr3139 (226 aa).

Asp8, Asp9, Ser38, and Asn89 together coordinate a divalent metal cation.

Belongs to the SurE nucleotidase family. A divalent metal cation is required as a cofactor.

Its subcellular location is the cytoplasm. It catalyses the reaction a ribonucleoside 5'-phosphate + H2O = a ribonucleoside + phosphate. Its function is as follows. Nucleotidase that shows phosphatase activity on nucleoside 5'-monophosphates. The polypeptide is Putative 5'-nucleotidase alr3139 (Nostoc sp. (strain PCC 7120 / SAG 25.82 / UTEX 2576)).